Consider the following 185-residue polypeptide: uncharacterized protein (185 aa).

This is an uncharacterized protein from Methanocaldococcus jannaschii (strain ATCC 43067 / DSM 2661 / JAL-1 / JCM 10045 / NBRC 100440) (Methanococcus jannaschii).